The chain runs to 97 residues: Large ribosomal subunit protein eL21 (97 aa).

It belongs to the eukaryotic ribosomal protein eL21 family.

This is Large ribosomal subunit protein eL21 from Methanoculleus marisnigri (strain ATCC 35101 / DSM 1498 / JR1).